The sequence spans 100 residues: Co-chaperonin GroES (100 aa).

The protein belongs to the GroES chaperonin family. As to quaternary structure, heptamer of 7 subunits arranged in a ring. Interacts with the chaperonin GroEL.

It is found in the cytoplasm. Its function is as follows. Together with the chaperonin GroEL, plays an essential role in assisting protein folding. The GroEL-GroES system forms a nano-cage that allows encapsulation of the non-native substrate proteins and provides a physical environment optimized to promote and accelerate protein folding. GroES binds to the apical surface of the GroEL ring, thereby capping the opening of the GroEL channel. This chain is Co-chaperonin GroES, found in Mycolicibacterium smegmatis (strain ATCC 700084 / mc(2)155) (Mycobacterium smegmatis).